The chain runs to 380 residues: Cytochrome b (380 aa).

4 consecutive transmembrane segments (helical) span residues 34–54 (FGSLLGICLITQILTGLLLAA), 78–99 (WLIRNLHANGASFFFICIYLHI), 114–134 (WNTGVTLLLTLMATAFVGYVL), and 179–199 (FFALHFLLPFMIAGLTLIHLT). Heme b is bound by residues H84 and H98. Residues H183 and H197 each coordinate heme b. H202 provides a ligand contact to a ubiquinone. Helical transmembrane passes span 227–247 (LKDILGFAIMLLLLTTLALFS), 289–309 (LGGVLALAASVLILFLTPFLH), 321–341 (LSQLLFWLLVANLLILTWVGS), and 348–368 (FIIIGQMASITYFIIILVLFP).

The protein belongs to the cytochrome b family. In terms of assembly, the cytochrome bc1 complex contains 11 subunits: 3 respiratory subunits (MT-CYB, CYC1 and UQCRFS1), 2 core proteins (UQCRC1 and UQCRC2) and 6 low-molecular weight proteins (UQCRH/QCR6, UQCRB/QCR7, UQCRQ/QCR8, UQCR10/QCR9, UQCR11/QCR10 and a cleavage product of UQCRFS1). This cytochrome bc1 complex then forms a dimer. Heme b serves as cofactor.

The protein localises to the mitochondrion inner membrane. Functionally, component of the ubiquinol-cytochrome c reductase complex (complex III or cytochrome b-c1 complex) that is part of the mitochondrial respiratory chain. The b-c1 complex mediates electron transfer from ubiquinol to cytochrome c. Contributes to the generation of a proton gradient across the mitochondrial membrane that is then used for ATP synthesis. This is Cytochrome b (MT-CYB) from Pharomachrus antisianus (Crested quetzal).